The primary structure comprises 265 residues: Beta-lactamase OXA-48 (265 aa).

Residues 1–22 (MRVLALSAVFLVASIIGMPAVA) form the signal peptide. The Acyl-ester intermediate role is filled by serine 70. Positions 70, 73, 118, and 250 each coordinate a beta-lactam. At lysine 73 the chain carries N6-carboxylysine.

This sequence belongs to the class-D beta-lactamase family. Monomer. Dimer. In terms of processing, carboxylated on the epsilon-amino group of a lysine, with the resulting carbamate functional group serving as a general base. Probably N-carboxylated at Lys-73 at neutral pH in vivo and undergoes complete N-decarboxylation, at pH 4.1, in vitro.

The catalysed reaction is a beta-lactam + H2O = a substituted beta-amino acid. Inhibited by avibactam, related diazabicyclooctane (DBO) derivatives and by bicyclic boronic acids, via a covalent binding to Ser-70. Inhibited by chloride, bromide and iodide ions. Not inhibited by the beta-lactamase-blocking agents, clavulanic acid or tazobactam. Its function is as follows. Class D beta-lactamase which confers resistance to the beta-lactam antibiotics, including amoxicillin, and moderate resistance to cephalosporins and carbapenems such as cephalothin and imipenem; in the DH10B strain of E.coli. Acts via hydrolysis of the beta-lactam ring. Has oxacillin-, cephalothin- and imipenem-hydrolyzing activities. The polypeptide is Beta-lactamase OXA-48 (Klebsiella pneumoniae).